A 910-amino-acid chain; its full sequence is DNA mismatch repair protein MutS (910 aa).

Position 658 to 665 (658 to 665) interacts with ATP; sequence GPNMGGKS.

The protein belongs to the DNA mismatch repair MutS family.

Functionally, this protein is involved in the repair of mismatches in DNA. It is possible that it carries out the mismatch recognition step. This protein has a weak ATPase activity. The chain is DNA mismatch repair protein MutS from Brucella anthropi (strain ATCC 49188 / DSM 6882 / CCUG 24695 / JCM 21032 / LMG 3331 / NBRC 15819 / NCTC 12168 / Alc 37) (Ochrobactrum anthropi).